We begin with the raw amino-acid sequence, 253 residues long: Putative enoyl-CoA hydratase (253 aa).

E131 is a catalytic residue.

This sequence belongs to the enoyl-CoA hydratase/isomerase family. As to quaternary structure, homohexamer; dimer of trimers.

It catalyses the reaction a (3S)-3-hydroxyacyl-CoA = a (2E)-enoyl-CoA + H2O. The chain is Putative enoyl-CoA hydratase from Thermus thermophilus (strain ATCC 27634 / DSM 579 / HB8).